A 378-amino-acid polypeptide reads, in one-letter code: MNAPTTVADSVTVPVSLGDRSYDILIGKGLVERAGEEVAKRLKGVRVAIVTDENVAAVHLERLQASFARAGIDSTPVIVAPGEKSKSFATLETVTNAILAAKLERGDAVVALGGGVVGDLSGFVAGIVRRGMNFVQMPTSLLAQVDSSVGGKTGINTAHGKNLVGVFNQPQLVLADTQVLDTLSPREFRAGYAEVAKYGLIDRPDFFAWLEANWQEVFSGGAARTKAIAESCRSKAAVVARDERETGDRALLNLGHTFGHALESATGYDSSRLVHGEGVAIGMALAYRFSARMNLAGIEAAERVEAHLKAVGLPVSLAEVPGGLPPAEKLMDYIAQDKKVTRGTLTFILTHGIGQSFIAKDVPPAAVLEFLKERLAIA.

NAD(+) is bound by residues 115–119, 139–140, Lys-152, and Lys-161; these read GVVGD and TS. Zn(2+)-binding residues include Glu-194, His-256, and His-275.

The protein belongs to the sugar phosphate cyclases superfamily. Dehydroquinate synthase family. Requires Co(2+) as cofactor. Zn(2+) is required as a cofactor. It depends on NAD(+) as a cofactor.

It is found in the cytoplasm. The enzyme catalyses 7-phospho-2-dehydro-3-deoxy-D-arabino-heptonate = 3-dehydroquinate + phosphate. It functions in the pathway metabolic intermediate biosynthesis; chorismate biosynthesis; chorismate from D-erythrose 4-phosphate and phosphoenolpyruvate: step 2/7. Functionally, catalyzes the conversion of 3-deoxy-D-arabino-heptulosonate 7-phosphate (DAHP) to dehydroquinate (DHQ). This is 3-dehydroquinate synthase from Brucella canis (strain ATCC 23365 / NCTC 10854 / RM-666).